We begin with the raw amino-acid sequence, 331 residues long: MKILAYCVRPDEIDSFKNFSEKYGHTVDLIPDSFGPNVAHLAKGYDGISILGNDTCNREALEKIKDCGIKYLATRTAGVNNIDFDAAKEFGINVANVPAYSPNSVSEFTVGLALSLTRKIPFALKRVELNNFALGGLIGVELRNLTLGVIGTGRIGLKVIEGFSGFGMKKMIGYDIFENEKAKEYIEYKSLDEVYKEADIITLHAPLTDDNYHMIGKESIAKMKDGVFIINAARGALIDSEALIEGLKSGKIAGAALDSYEYEQGVFHNNKMNEIMKDDTLERLKSFPNVVITPHLGFYTDEAVSNMVEITLMNLQEFELKGTCKNQRVCK.

Residues 154–155 (RI), Asp-175, 205–206 (AP), Asn-211, 232–234 (AAR), and Asp-258 contribute to the NAD(+) site. The active site involves Arg-234. Glu-263 is a catalytic residue. The active-site Proton donor is His-295.

This sequence belongs to the D-isomer specific 2-hydroxyacid dehydrogenase family.

The catalysed reaction is (R)-3-phenyllactate + NAD(+) = 3-phenylpyruvate + NADH + H(+). It catalyses the reaction (2R)-2-hydroxy-3-(4-hydroxyphenyl)propanoate + NAD(+) = 3-(4-hydroxyphenyl)pyruvate + NADH + H(+). The enzyme catalyses 3-(indol-3-yl)lactate + NAD(+) = indole-3-pyruvate + NADH + H(+). Its pathway is amino-acid degradation. Its function is as follows. Essential for the reductive metabolism of L-phenylalanine, L-tyrosine and L-tryptophan. Catalyzes the conversion of phenylpyruvic acid to phenyllactic acid, 4-hydroxy-phenylpyruvic acid to 4-hydroxy-phenyllactic acid, and indolepyruvic acid to indolelactic acid. The polypeptide is Aromatic 2-oxoacid reductase (Clostridium sporogenes (strain ATCC 15579)).